The primary structure comprises 631 residues: Phosphomethylpyrimidine synthase (631 aa).

Residues asparagine 239, methionine 268, tyrosine 297, histidine 333, 353 to 355, 394 to 397, and glutamate 433 contribute to the substrate site; these read SRG and DGLR. Histidine 437 contacts Zn(2+). Residue tyrosine 460 coordinates substrate. Histidine 501 is a binding site for Zn(2+). [4Fe-4S] cluster contacts are provided by cysteine 581, cysteine 584, and cysteine 589.

It belongs to the ThiC family. As to quaternary structure, homodimer. The cofactor is [4Fe-4S] cluster.

The catalysed reaction is 5-amino-1-(5-phospho-beta-D-ribosyl)imidazole + S-adenosyl-L-methionine = 4-amino-2-methyl-5-(phosphooxymethyl)pyrimidine + CO + 5'-deoxyadenosine + formate + L-methionine + 3 H(+). The protein operates within cofactor biosynthesis; thiamine diphosphate biosynthesis. Catalyzes the synthesis of the hydroxymethylpyrimidine phosphate (HMP-P) moiety of thiamine from aminoimidazole ribotide (AIR) in a radical S-adenosyl-L-methionine (SAM)-dependent reaction. The sequence is that of Phosphomethylpyrimidine synthase from Salmonella heidelberg (strain SL476).